The chain runs to 235 residues: Protein Thf1 (235 aa).

Positions 179–228 (LNLSSDKLQKDLDLYRSNVDKMGQLLAVIEDALEAERKKREKAKQEVATT) form a coiled coil.

The protein belongs to the THF1 family.

In terms of biological role, may be involved in photosynthetic membrane biogenesis. In Rippkaea orientalis (strain PCC 8801 / RF-1) (Cyanothece sp. (strain PCC 8801)), this protein is Protein Thf1.